Consider the following 434-residue polypeptide: Glutamate-1-semialdehyde 2,1-aminomutase 1 (434 aa).

At Lys-270 the chain carries N6-(pyridoxal phosphate)lysine.

It belongs to the class-III pyridoxal-phosphate-dependent aminotransferase family. HemL subfamily. In terms of assembly, homodimer. Requires pyridoxal 5'-phosphate as cofactor.

It is found in the cytoplasm. The catalysed reaction is (S)-4-amino-5-oxopentanoate = 5-aminolevulinate. The protein operates within porphyrin-containing compound metabolism; protoporphyrin-IX biosynthesis; 5-aminolevulinate from L-glutamyl-tRNA(Glu): step 2/2. The polypeptide is Glutamate-1-semialdehyde 2,1-aminomutase 1 (Bacillus cereus (strain ATCC 10987 / NRS 248)).